A 216-amino-acid polypeptide reads, in one-letter code: MVEWITSDAPVPYPLAVAEMEARANAIAKGEAGEAVWLLEHPPLYTAGTSARESDLRDPDRFPVFETRRGGQYTYHGPGQRVAYVMLDLNTRGKDVRAFVQRLEAWVIAALDDFNVTGAVREGRVGVWVDRPEKAPLPDGTPREDKIAAIGVRLRKWVSFHGLSINVEPDLSHFDGIVPCGIEGHGVTSLVDLGLPVTMADLDVALKRQFFEVFGA.

In terms of domain architecture, BPL/LPL catalytic spans 30-216; sequence GEAGEAVWLL…KRQFFEVFGA (187 aa). Residues 69–76, 149–151, and 162–164 each bind substrate; these read RGGQYTYH, AIG, and GLS. Residue C180 is the Acyl-thioester intermediate of the active site.

It belongs to the LipB family.

The protein resides in the cytoplasm. The enzyme catalyses octanoyl-[ACP] + L-lysyl-[protein] = N(6)-octanoyl-L-lysyl-[protein] + holo-[ACP] + H(+). The protein operates within protein modification; protein lipoylation via endogenous pathway; protein N(6)-(lipoyl)lysine from octanoyl-[acyl-carrier-protein]: step 1/2. Catalyzes the transfer of endogenously produced octanoic acid from octanoyl-acyl-carrier-protein onto the lipoyl domains of lipoate-dependent enzymes. Lipoyl-ACP can also act as a substrate although octanoyl-ACP is likely to be the physiological substrate. The protein is Octanoyltransferase of Jannaschia sp. (strain CCS1).